Consider the following 524-residue polypeptide: Glutamyl-tRNA(Gln) amidotransferase subunit A, mitochondrial (524 aa).

Residues K76 and S171 each act as charge relay system in the active site. S195 serves as the catalytic Acyl-ester intermediate.

This sequence belongs to the amidase family. GatA subfamily. Subunit of the heterotrimeric GatCAB amidotransferase (AdT) complex, composed of A (qrsl1), B (gatb) and C (gatc) subunits.

The protein localises to the mitochondrion. It carries out the reaction L-glutamyl-tRNA(Gln) + L-glutamine + ATP + H2O = L-glutaminyl-tRNA(Gln) + L-glutamate + ADP + phosphate + H(+). In terms of biological role, allows the formation of correctly charged Gln-tRNA(Gln) through the transamidation of misacylated Glu-tRNA(Gln) in the mitochondria. The reaction takes place in the presence of glutamine and ATP through an activated gamma-phospho-Glu-tRNA(Gln). The protein is Glutamyl-tRNA(Gln) amidotransferase subunit A, mitochondrial (qrsl1) of Xenopus laevis (African clawed frog).